Here is a 274-residue protein sequence, read N- to C-terminus: HTH-type transcriptional regulator GadX (274 aa).

An HTH araC/xylS-type domain is found at 145–242; sequence TRVCTVINNN…GMTPTEYQER (98 aa). 2 consecutive DNA-binding regions (H-T-H motif) follow at residues 162-183 and 209-232; these read ARIASELLMSPSLLKKKLREEE and IKRVAVSCGYHSVSYFIYVFRNYY.

In terms of assembly, homodimer.

In terms of biological role, positively regulates the expression of about fifteen genes involved in acid resistance such as gadA, gadB and gadC. Depending on the conditions (growth phase and medium), can repress gadW. In Escherichia coli (strain K12), this protein is HTH-type transcriptional regulator GadX (gadX).